Here is a 187-residue protein sequence, read N- to C-terminus: MFLIVGLGNPGLKYEHTRHNMGFDAIENIAAKHNISIDKKGFKGLYGKGIIDGEKVILLKPYTYMNLSGESVVEAANYYKINKENIVVIYDDISLDVGKIRIRTKGSAGGHNGIKNIVLHLSSEEFPRVKVGVGEPTENLVNYVLGKFSQDERKKIEEVLNIVTEAVECMVVDGVQNAMNKFNGLKL.

TRNA is bound at residue Tyr14. His19 functions as the Proton acceptor in the catalytic mechanism. Residues Tyr64, Asn66, and Asn112 each coordinate tRNA.

It belongs to the PTH family. As to quaternary structure, monomer.

The protein localises to the cytoplasm. It catalyses the reaction an N-acyl-L-alpha-aminoacyl-tRNA + H2O = an N-acyl-L-amino acid + a tRNA + H(+). Functionally, hydrolyzes ribosome-free peptidyl-tRNAs (with 1 or more amino acids incorporated), which drop off the ribosome during protein synthesis, or as a result of ribosome stalling. Its function is as follows. Catalyzes the release of premature peptidyl moieties from peptidyl-tRNA molecules trapped in stalled 50S ribosomal subunits, and thus maintains levels of free tRNAs and 50S ribosomes. The protein is Peptidyl-tRNA hydrolase of Clostridium acetobutylicum (strain ATCC 824 / DSM 792 / JCM 1419 / IAM 19013 / LMG 5710 / NBRC 13948 / NRRL B-527 / VKM B-1787 / 2291 / W).